The sequence spans 361 residues: Trans-2,3-enoyl-CoA reductase-like (361 aa).

Phosphoserine occurs at positions 33 and 35. The next 4 helical transmembrane spans lie at 139 to 159 (VGWT…YLLF), 181 to 201 (VHLA…ETLF), 215 to 235 (LIKG…YINH), and 309 to 329 (ISFT…LMTI).

This sequence belongs to the steroid 5-alpha reductase family. Expression is highest in the heart with very low to almost undetectable levels in brain, skeletal muscle, stomach, pancreas, liver, kidney, small intestine, and uterus.

It localises to the membrane. It is found in the endoplasmic reticulum. The sequence is that of Trans-2,3-enoyl-CoA reductase-like (Tecrl) from Mus musculus (Mouse).